Consider the following 35-residue polypeptide: Photosystem II reaction center protein M (35 aa).

Residues 5–25 traverse the membrane as a helical segment; sequence ILAFIATALFILVPTAFLLII.

It belongs to the PsbM family. In terms of assembly, PSII is composed of 1 copy each of membrane proteins PsbA, PsbB, PsbC, PsbD, PsbE, PsbF, PsbH, PsbI, PsbJ, PsbK, PsbL, PsbM, PsbT, PsbX, PsbY, PsbZ, Psb30/Ycf12, at least 3 peripheral proteins of the oxygen-evolving complex and a large number of cofactors. It forms dimeric complexes.

The protein resides in the plastid. Its subcellular location is the chloroplast thylakoid membrane. Its function is as follows. One of the components of the core complex of photosystem II (PSII). PSII is a light-driven water:plastoquinone oxidoreductase that uses light energy to abstract electrons from H(2)O, generating O(2) and a proton gradient subsequently used for ATP formation. It consists of a core antenna complex that captures photons, and an electron transfer chain that converts photonic excitation into a charge separation. This subunit is found at the monomer-monomer interface. The polypeptide is Photosystem II reaction center protein M (Amborella trichopoda).